The sequence spans 180 residues: MDLPDVTAVQHESRQLALASSAAELHGGLCGWLSGGGADSADWLARILADSGQVAPRQGGALDQLRQATVAQLEDRDFAFELLLVEDGAPLPARTDALFDWCRAFLGGFGLAAQQRPALSEEGEEALQDLARLAQASSDDFDTADEDDTALAEIEEFVRVAVLLLHGDCVMGPRFRQRLN.

This sequence belongs to the UPF0149 family.

The polypeptide is UPF0149 protein XAC3406 (Xanthomonas axonopodis pv. citri (strain 306)).